The following is a 97-amino-acid chain: DNA-binding protein NEQ150 (97 aa).

This sequence belongs to the PDCD5 family.

The polypeptide is DNA-binding protein NEQ150 (Nanoarchaeum equitans (strain Kin4-M)).